A 946-amino-acid chain; its full sequence is Aminopeptidase N (946 aa).

The signal sequence occupies residues 1-15 (MRLLICLTLLGLVCG). Asn60 carries an N-linked (GlcNAc...) asparagine glycan. Residue 308–312 (GAMEN) participates in substrate binding. His344 provides a ligand contact to Zn(2+). The Proton acceptor role is filled by Glu345. His348 and Glu367 together coordinate Zn(2+). Residues Asn550 and Asn605 are each glycosylated (N-linked (GlcNAc...) asparagine). 2 disulfide bridges follow: Cys715/Cys722 and Cys751/Cys787.

Belongs to the peptidase M1 family. It depends on Zn(2+) as a cofactor.

It is found in the cell membrane. The catalysed reaction is Release of an N-terminal amino acid, Xaa-|-Yaa- from a peptide, amide or arylamide. Xaa is preferably Ala, but may be most amino acids including Pro (slow action). When a terminal hydrophobic residue is followed by a prolyl residue, the two may be released as an intact Xaa-Pro dipeptide.. The protein is Aminopeptidase N (APN1) of Plutella xylostella (Diamondback moth).